A 324-amino-acid polypeptide reads, in one-letter code: Glyoxylate/hydroxypyruvate reductase B (324 aa).

Active-site residues include R237 and E266. H285 acts as the Proton donor in catalysis.

The protein belongs to the D-isomer specific 2-hydroxyacid dehydrogenase family. GhrB subfamily. In terms of assembly, homodimer.

The protein resides in the cytoplasm. It carries out the reaction glycolate + NADP(+) = glyoxylate + NADPH + H(+). The enzyme catalyses (R)-glycerate + NAD(+) = 3-hydroxypyruvate + NADH + H(+). It catalyses the reaction (R)-glycerate + NADP(+) = 3-hydroxypyruvate + NADPH + H(+). In terms of biological role, catalyzes the NADPH-dependent reduction of glyoxylate and hydroxypyruvate into glycolate and glycerate, respectively. The protein is Glyoxylate/hydroxypyruvate reductase B of Salmonella paratyphi B (strain ATCC BAA-1250 / SPB7).